Here is a 233-residue protein sequence, read N- to C-terminus: Orotidine 5'-phosphate decarboxylase (233 aa).

Substrate is bound by residues D11, K34, 61–70, T117, R179, Q188, G208, and R209; that span reads DLKLHDIPNT. The active-site Proton donor is K63.

This sequence belongs to the OMP decarboxylase family. Type 1 subfamily. As to quaternary structure, homodimer.

It catalyses the reaction orotidine 5'-phosphate + H(+) = UMP + CO2. It functions in the pathway pyrimidine metabolism; UMP biosynthesis via de novo pathway; UMP from orotate: step 2/2. Its function is as follows. Catalyzes the decarboxylation of orotidine 5'-monophosphate (OMP) to uridine 5'-monophosphate (UMP). This Streptococcus pneumoniae (strain JJA) protein is Orotidine 5'-phosphate decarboxylase.